Reading from the N-terminus, the 457-residue chain is tRNA-2-methylthio-N(6)-dimethylallyladenosine synthase (457 aa).

The MTTase N-terminal domain maps to 8 to 123 (KKVFIKTFGC…LPEMLARRDA (116 aa)). Positions 17, 54, 86, 160, 164, and 167 each coordinate [4Fe-4S] cluster. The region spanning 146-379 (RVDGATAFVS…QEAIEANGRR (234 aa)) is the Radical SAM core domain. The TRAM domain maps to 382-449 (QSRVGTVQRI…PHSLRGEVLL (68 aa)).

This sequence belongs to the methylthiotransferase family. MiaB subfamily. As to quaternary structure, monomer. It depends on [4Fe-4S] cluster as a cofactor.

The protein localises to the cytoplasm. The catalysed reaction is N(6)-dimethylallyladenosine(37) in tRNA + (sulfur carrier)-SH + AH2 + 2 S-adenosyl-L-methionine = 2-methylsulfanyl-N(6)-dimethylallyladenosine(37) in tRNA + (sulfur carrier)-H + 5'-deoxyadenosine + L-methionine + A + S-adenosyl-L-homocysteine + 2 H(+). Its function is as follows. Catalyzes the methylthiolation of N6-(dimethylallyl)adenosine (i(6)A), leading to the formation of 2-methylthio-N6-(dimethylallyl)adenosine (ms(2)i(6)A) at position 37 in tRNAs that read codons beginning with uridine. The protein is tRNA-2-methylthio-N(6)-dimethylallyladenosine synthase of Methylibium petroleiphilum (strain ATCC BAA-1232 / LMG 22953 / PM1).